The primary structure comprises 127 residues: Small ribosomal subunit protein bS6 (127 aa).

A disordered region spans residues 101 to 127 (PMMKEEKARDLLQGAKADAPAEQPAAA). Residues 115–127 (AKADAPAEQPAAA) are compositionally biased toward low complexity.

The protein belongs to the bacterial ribosomal protein bS6 family.

In terms of biological role, binds together with bS18 to 16S ribosomal RNA. The chain is Small ribosomal subunit protein bS6 from Thiobacillus denitrificans (strain ATCC 25259 / T1).